Consider the following 568-residue polypeptide: Dihydroxy-acid dehydratase (568 aa).

Cys59 contacts [2Fe-2S] cluster. Residue Asp91 coordinates Mg(2+). Residue Cys132 participates in [2Fe-2S] cluster binding. Residues Asp133 and Lys134 each contribute to the Mg(2+) site. Lys134 is subject to N6-carboxylysine. Cys204 is a [2Fe-2S] cluster binding site. Glu456 serves as a coordination point for Mg(2+). Ser482 acts as the Proton acceptor in catalysis.

Belongs to the IlvD/Edd family. As to quaternary structure, homodimer. Requires [2Fe-2S] cluster as cofactor. Mg(2+) serves as cofactor.

It carries out the reaction (2R)-2,3-dihydroxy-3-methylbutanoate = 3-methyl-2-oxobutanoate + H2O. The catalysed reaction is (2R,3R)-2,3-dihydroxy-3-methylpentanoate = (S)-3-methyl-2-oxopentanoate + H2O. The protein operates within amino-acid biosynthesis; L-isoleucine biosynthesis; L-isoleucine from 2-oxobutanoate: step 3/4. Its pathway is amino-acid biosynthesis; L-valine biosynthesis; L-valine from pyruvate: step 3/4. Functions in the biosynthesis of branched-chain amino acids. Catalyzes the dehydration of (2R,3R)-2,3-dihydroxy-3-methylpentanoate (2,3-dihydroxy-3-methylvalerate) into 2-oxo-3-methylpentanoate (2-oxo-3-methylvalerate) and of (2R)-2,3-dihydroxy-3-methylbutanoate (2,3-dihydroxyisovalerate) into 2-oxo-3-methylbutanoate (2-oxoisovalerate), the penultimate precursor to L-isoleucine and L-valine, respectively. This Verminephrobacter eiseniae (strain EF01-2) protein is Dihydroxy-acid dehydratase.